The primary structure comprises 332 residues: Cytoplasmic phosphatidylinositol transfer protein 1 (332 aa).

A phosphoserine mark is found at serine 119, serine 122, serine 270, and serine 274. A compositionally biased stretch (low complexity) spans 272–281; sequence PSSAPSTPLS. A disordered region spans residues 272 to 332; the sequence is PSSAPSTPLS…SEKPCRPKSE (61 aa). Threonine 278 carries the phosphothreonine modification.

It belongs to the PtdIns transfer protein family. PI transfer class IIB subfamily. As to expression, widely expressed in brain, with expression in the gray matters of pre- and postnatal brains. In terms of tissue distribution, weakly expressed in brain and is rather confined to the embryonic stage.

The protein resides in the cytoplasm. It localises to the nucleus. The enzyme catalyses a 1,2-diacyl-sn-glycero-3-phospho-(1D-myo-inositol)(in) = a 1,2-diacyl-sn-glycero-3-phospho-(1D-myo-inositol)(out). It carries out the reaction a 1,2-diacyl-sn-glycero-3-phosphate(in) = a 1,2-diacyl-sn-glycero-3-phosphate(out). In terms of biological role, catalyzes the transfer of phosphatidylinositol (PI) and phosphatidic acid (PA) between membranes. Binds PA derived from the phospholipase D signaling pathway and among the cellular PA species, preferably binds to the C16:0/16:1 and C16:1/18:1 PA species. Functionally, specifically binds to phosphatidylinositol but not to other phospholipids and may play a role in the phosphoinositide-mediated signaling in the neural development. The chain is Cytoplasmic phosphatidylinositol transfer protein 1 (Pitpnc1) from Mus musculus (Mouse).